We begin with the raw amino-acid sequence, 501 residues long: uncharacterized protein (501 aa).

Belongs to the UbiD family.

This is an uncharacterized protein from Synechocystis sp. (strain ATCC 27184 / PCC 6803 / Kazusa).